Reading from the N-terminus, the 649-residue chain is Endoplasmic reticulum membrane protein 65 (649 aa).

Residues 1 to 55 form a disordered region; it reads MGSNTSPGQADPLESENESSLTSRFLPNKRDGGKDNESVIPEKEEPDLNEPVLAV. Topologically, residues 1–165 are cytoplasmic; the sequence is MGSNTSPGQA…LATPYAIEKT (165 aa). A compositionally biased stretch (basic and acidic residues) spans 28–43; the sequence is NKRDGGKDNESVIPEK. The residue at position 94 (Ser-94) is a Phosphoserine. A helical transmembrane segment spans residues 166-186; it reads FLFGWFVSVDSFLYIFTLFPI. The Lumenal portion of the chain corresponds to 187-302; the sequence is RVLISFFTLS…NFWNPAGWMT (116 aa). The N-linked (GlcNAc...) asparagine glycan is linked to Asn-215. Residues 303–323 traverse the membrane as a helical segment; sequence FFYYFAISLAYMVLHTLVLLY. Residues 324 to 366 lie on the Cytoplasmic side of the membrane; that stretch reads QIITLNVTVNSYSNAVLALLMSNQLVEIKGAVFKKFEKENLFQ. A helical membrane pass occupies residues 367 to 387; sequence LTCSDVVERFQITIMVIIIFL. Over 388 to 414 the chain is Lumenal; that stretch reads RNLAELYTTSSLDQPLLTFKRLKTLLA. A helical transmembrane segment spans residues 415 to 435; sequence PFFWVIGSELFVDWLKHAFII. Topologically, residues 436–479 are cytoplasmic; sequence KFNYIKPSIYSRFTDVLCHDYVASGAQLTQTVTGCSQQVARRMG. A helical transmembrane segment spans residues 480-500; that stretch reads LPVLPLVCVFIRTSMQTWSMF. Residues 501 to 557 lie on the Lumenal side of the membrane; the sequence is RSTHSMKQEIAKSIGTIFPTKDNYVYYLPNKEANTYNAGKEASWETLLLSVVRGKSG. A helical membrane pass occupies residues 558–578; sequence IAFLFFMAIMLKLLLGKAILA. Residues 579-649 are Cytoplasmic-facing; that stretch reads ITQSRYESMQ…RYAMHSKRIW (71 aa).

It belongs to the TAPT1 family. As to quaternary structure, interacts with slp1.

It is found in the endoplasmic reticulum membrane. Its function is as follows. May be involved in membrane protein folding. The sequence is that of Endoplasmic reticulum membrane protein 65 from Schizosaccharomyces pombe (strain 972 / ATCC 24843) (Fission yeast).